The primary structure comprises 127 residues: MTLDPYYETMYILRPDIPEEEVESHLTKYRDMLVEAGADVLDNQMRGKRRLAYPIDKHKEGIYVQLSHNGDGQQVAVLEKAMRLSEDVIRYLTVKQEGPLPAPRVVPGSEPAAAPQEQPAANSEAAS.

The tract at residues 99–127 (PLPAPRVVPGSEPAAAPQEQPAANSEAAS) is disordered. A compositionally biased stretch (low complexity) spans 109–127 (SEPAAAPQEQPAANSEAAS).

This sequence belongs to the bacterial ribosomal protein bS6 family.

Functionally, binds together with bS18 to 16S ribosomal RNA. The sequence is that of Small ribosomal subunit protein bS6 from Parasynechococcus marenigrum (strain WH8102).